Here is a 193-residue protein sequence, read N- to C-terminus: RNA pyrophosphohydrolase (193 aa).

In terms of domain architecture, Nudix hydrolase spans 6-149; that stretch reads GFRPNVGIIL…KRDVYQRALQ (144 aa). The short motif at 38 to 59 is the Nudix box element; the sequence is GGIKFGETPEQAMFRELEEEVG. The interval 174 to 193 is disordered; sequence THSARKTDEPSTEQTKPNNE.

It belongs to the Nudix hydrolase family. RppH subfamily. A divalent metal cation serves as cofactor.

Accelerates the degradation of transcripts by removing pyrophosphate from the 5'-end of triphosphorylated RNA, leading to a more labile monophosphorylated state that can stimulate subsequent ribonuclease cleavage. The sequence is that of RNA pyrophosphohydrolase from Herminiimonas arsenicoxydans.